The primary structure comprises 902 residues: Gamma-tubulin complex component 2 (902 aa).

The residue at position 83 (Y83) is a Phosphotyrosine. Residues 875–902 form a disordered region; that stretch reads ERSQKAAPQVPVLRGPPAPAPRVAVTAQ.

Belongs to the TUBGCP family. Component of the gamma-tubulin ring complex (gTuRC) consisting of TUBGCP2, TUBGCP3, TUBGCP4, TUBGCP5 and TUBGCP6 and gamma-tubulin TUBG1 or TUBG2. TUBGCP2, TUBGCP3, TUBGCP4, TUBGCP5 and TUBGCP6 assemble in a 5:5:2:1:1 stoichiometry; each is associated with a gamma-tubulin, thereby arranging 14 gamma-tubulins in a helical manner. Gamma-tubulin at the first position is blocked by TUBGCP3 at the last position, allowing 13 protafilaments to grow into a microtubule. The gTuRC (via TUBGCP3 and TUBGCP6) interacts with ACTB and MZT1; the interactions form a luminal bridge that stabilizes the initial structure during complex assembly. The gTuRC (via TUBGCP2) interacts with MZT2A/MZT2B and CDK5RAP2 (via CM1 motif); the interactions play a role in gTuRC activation. Interacts with ATF5; the ATF5:PCNT:polyglutamylated tubulin (PGT) tripartite unites the mother centriole and the pericentriolar material (PCM) in the centrosome.

Its subcellular location is the cytoplasm. The protein resides in the cytoskeleton. The protein localises to the microtubule organizing center. It localises to the centrosome. Component of the gamma-tubulin ring complex (gTuRC) which mediates microtubule nucleation. The gTuRC regulates the minus-end nucleation of alpha-beta tubulin heterodimers that grow into microtubule protafilaments, a critical step in centrosome duplication and spindle formation. Plays a role in neuronal migration. The protein is Gamma-tubulin complex component 2 (TUBGCP2) of Pongo abelii (Sumatran orangutan).